We begin with the raw amino-acid sequence, 260 residues long: Vesicle-associated membrane protein 7B (260 aa).

The Cytoplasmic portion of the chain corresponds to 1–189; it reads MPIIYSLVAR…KCAMWWKNVK (189 aa). A Longin domain is found at 7–110; it reads LVARGSSVLA…GMNSDFSRTL (104 aa). Residues 125 to 186 form the v-SNARE coiled-coil homology domain; that stretch reads TMSRTMAEID…KQLKCAMWWK (62 aa). The chain crosses the membrane as a helical; Anchor for type IV membrane protein span at residues 190-210; the sequence is LMLVLGAIVLIIIFIIVMSYC. At 211–260 the chain is on the vesicular side; the sequence is DGFRSGSKCRSSPSSNSTPTPTPTETPTPTPTPTSTPTPSQLLETLLNQF. Residues 215–250 form a disordered region; the sequence is SGSKCRSSPSSNSTPTPTPTETPTPTPTPTSTPTPS. Pro residues predominate over residues 230 to 246; it reads TPTPTETPTPTPTPTST.

This sequence belongs to the synaptobrevin family.

Its subcellular location is the cytoplasmic vesicle. It is found in the secretory vesicle membrane. It localises to the golgi apparatus. The protein resides in the trans-Golgi network membrane. The protein localises to the late endosome membrane. Its subcellular location is the lysosome membrane. It is found in the endoplasmic reticulum membrane. It localises to the phagosome membrane. Functionally, involved in the targeting and/or fusion of transport vesicles to their target membrane during transport of proteins from the early endosome to the lysosome. Required for heterotypic fusion of late endosomes with lysosomes and homotypic lysosomal fusion. The sequence is that of Vesicle-associated membrane protein 7B from Dictyostelium discoideum (Social amoeba).